The following is a 431-amino-acid chain: Cyclin-B2-4 (431 aa).

Residues 1–30 are disordered; sequence MGGSDENRHGVIGPMNRQQGGLRGGKVIPT.

This sequence belongs to the cyclin family. Cyclin AB subfamily. As to quaternary structure, interacts with SMR11.

This is Cyclin-B2-4 (CYCB2-4) from Arabidopsis thaliana (Mouse-ear cress).